Consider the following 187-residue polypeptide: HTH-type dhaKLM operon transcriptional activator DhaS (187 aa).

The HTH tetR-type domain maps to 12–72 (IITQKIIAKA…WIFENDFAEL (61 aa)). Positions 35 to 54 (SVSDIMQTAKIRRQTFYNYF) form a DNA-binding region, H-T-H motif.

As to quaternary structure, homodimer. Interacts with a homodimer of DhaQ.

Functionally, in complex with DhaQ, upon activation by dihydroxyacetone, activates transcription of the dhaKLM operon. Binds the inverted repeat sequence 5'-GGACACATN(6)ATTTGTCC-3' located upstream of and partially overlapping with the -35 promoter sequence of the dhaKLM operon promoter. The sequence is that of HTH-type dhaKLM operon transcriptional activator DhaS (dhaS) from Lactococcus lactis subsp. lactis (strain IL1403) (Streptococcus lactis).